The following is a 545-amino-acid chain: Glucose-6-phosphate isomerase (545 aa).

The active-site Proton donor is the Glu-351. Catalysis depends on residues His-382 and Lys-510.

Belongs to the GPI family.

The protein localises to the cytoplasm. It carries out the reaction alpha-D-glucose 6-phosphate = beta-D-fructose 6-phosphate. The protein operates within carbohydrate biosynthesis; gluconeogenesis. It participates in carbohydrate degradation; glycolysis; D-glyceraldehyde 3-phosphate and glycerone phosphate from D-glucose: step 2/4. In terms of biological role, catalyzes the reversible isomerization of glucose-6-phosphate to fructose-6-phosphate. The protein is Glucose-6-phosphate isomerase of Shewanella baltica (strain OS155 / ATCC BAA-1091).